Here is a 142-residue protein sequence, read N- to C-terminus: Large ribosomal subunit protein uL11 (142 aa).

Belongs to the universal ribosomal protein uL11 family. Part of the ribosomal stalk of the 50S ribosomal subunit. Interacts with L10 and the large rRNA to form the base of the stalk. L10 forms an elongated spine to which L12 dimers bind in a sequential fashion forming a multimeric L10(L12)X complex. In terms of processing, one or more lysine residues are methylated.

Its function is as follows. Forms part of the ribosomal stalk which helps the ribosome interact with GTP-bound translation factors. The chain is Large ribosomal subunit protein uL11 from Nocardioides sp. (strain ATCC BAA-499 / JS614).